We begin with the raw amino-acid sequence, 1036 residues long: Hexagonally packed intermediate-layer surface protein (1036 aa).

Positions 1–17 are cleaved as a signal peptide; it reads MKKNIALMALTGVLTLA. Disulfide bonds link Cys-74/Cys-86, Cys-256/Cys-275, and Cys-642/Cys-754.

Post-translationally, glycosylated; contains six glycans. In terms of processing, acylated in the N-terminal region. The N-terminus is blocked.

The protein localises to the secreted. It is found in the cell wall. The protein resides in the S-layer. Functionally, shape maintenance, possible protection from noxious enzymes or exogenous and unsettling DNA, and may mediate homotypic cell-cell contacts. This chain is Hexagonally packed intermediate-layer surface protein (hpi), found in Deinococcus radiodurans.